We begin with the raw amino-acid sequence, 58 residues long: Small ribosomal subunit protein bS21A (58 aa).

The tract at residues 38-58 is disordered; that stretch reads YEKPSLRRKRKAEAARKGGRN. The span at 49-58 shows a compositional bias: basic and acidic residues; it reads AEAARKGGRN.

It belongs to the bacterial ribosomal protein bS21 family.

The chain is Small ribosomal subunit protein bS21A from Trichormus variabilis (strain ATCC 29413 / PCC 7937) (Anabaena variabilis).